A 316-amino-acid chain; its full sequence is Ribose-phosphate pyrophosphokinase (316 aa).

ATP contacts are provided by residues 39 to 41 (DGE) and 98 to 99 (RQ). Mg(2+) is bound by residues His-133 and Asp-172. The active site involves Lys-195. Residues Arg-197, Asp-221, and 225-229 (DTANT) contribute to the D-ribose 5-phosphate site.

This sequence belongs to the ribose-phosphate pyrophosphokinase family. Class I subfamily. Homohexamer. Mg(2+) serves as cofactor.

It is found in the cytoplasm. The enzyme catalyses D-ribose 5-phosphate + ATP = 5-phospho-alpha-D-ribose 1-diphosphate + AMP + H(+). It participates in metabolic intermediate biosynthesis; 5-phospho-alpha-D-ribose 1-diphosphate biosynthesis; 5-phospho-alpha-D-ribose 1-diphosphate from D-ribose 5-phosphate (route I): step 1/1. Functionally, involved in the biosynthesis of the central metabolite phospho-alpha-D-ribosyl-1-pyrophosphate (PRPP) via the transfer of pyrophosphoryl group from ATP to 1-hydroxyl of ribose-5-phosphate (Rib-5-P). This chain is Ribose-phosphate pyrophosphokinase, found in Nitrosomonas europaea (strain ATCC 19718 / CIP 103999 / KCTC 2705 / NBRC 14298).